The sequence spans 235 residues: Kinetochore protein Spc25 (235 aa).

Residues 44–106 (KNILSAKEAI…DMEAQLLRHT (63 aa)) adopt a coiled-coil conformation. The disordered stretch occupies residues 193–216 (EVAGASPVTPSGSERPKATSKHSN).

Belongs to the SPC25 family. Component of the Ndc80 complex, which is composed of Ndc80, Nuf2 and Spc25.

Its subcellular location is the nucleus. The protein resides in the chromosome. It is found in the centromere. It localises to the kinetochore. Its function is as follows. Acts as a component of the essential kinetochore-associated Ndc80 complex, which is required for chromosome segregation and spindle checkpoint activity during meiosis and mitosis. Required for kinetochore integrity and the organization of stable microtubule binding sites in the outer plate of the kinetochore. Participates in SAC signaling that responds specifically to disruptions in spindle microtubule dynamics. The NDC80 complex synergistically enhances the affinity of the SKA1 complex for microtubules and may allow the NDC80 complex to track depolymerizing microtubules. This chain is Kinetochore protein Spc25, found in Drosophila pseudoobscura pseudoobscura (Fruit fly).